The primary structure comprises 296 residues: Putative ankyrin repeat protein FPV216 (296 aa).

2 ANK repeats span residues 73-102 and 107-136; these read SYVN…DVNT and LVIT…NINI.

This Fowlpox virus (strain NVSL) (FPV) protein is Putative ankyrin repeat protein FPV216.